The sequence spans 306 residues: D-alanine--D-alanine ligase B (306 aa).

The ATP-grasp domain occupies 101-303 (KLLWQGAGLP…FSQLVVRILE (203 aa)). 134–189 (ISALGLPLIVKPSREGSSVGMTKVVEENALQGALSLAFQHDDEILIEKWLCGPEFT) contacts ATP. Residues D257, E270, and N272 each coordinate Mg(2+).

This sequence belongs to the D-alanine--D-alanine ligase family. As to quaternary structure, monomer. It depends on Mg(2+) as a cofactor. Mn(2+) is required as a cofactor.

It is found in the cytoplasm. It catalyses the reaction 2 D-alanine + ATP = D-alanyl-D-alanine + ADP + phosphate + H(+). It participates in cell wall biogenesis; peptidoglycan biosynthesis. In terms of biological role, cell wall formation. The sequence is that of D-alanine--D-alanine ligase B (ddlB) from Salmonella typhimurium (strain LT2 / SGSC1412 / ATCC 700720).